A 295-amino-acid chain; its full sequence is Non-selective voltage-gated ion channel VDAC2 (295 aa).

2 residues coordinate ATP: lysine 24 and lysine 32. Residue lysine 32 is modified to N6-acetyllysine; alternate. At lysine 32 the chain carries N6-succinyllysine; alternate. A Glycyl lysine isopeptide (Lys-Gly) (interchain with G-Cter in ubiquitin); alternate cross-link involves residue lysine 32. Beta stranded transmembrane passes span 38–45 (LVKLDVKT) and 51–60 (VEFSTSGSSN). A Glycyl lysine isopeptide (Lys-Gly) (interchain with G-Cter in ubiquitin) cross-link involves residue lysine 65. Residues 66–76 (VSGTLETKYKW) traverse the membrane as a beta stranded segment. A Phosphotyrosine modification is found at tyrosine 79. Transmembrane regions (beta stranded) follow at residues 81–88 (LTFTEKWN), 92–100 (TLGTEIAIE), and 107–116 (LKLTFDTTFS). The residue at position 119 (threonine 119) is a Phosphothreonine. Lysine 121 is modified (N6-acetyllysine; alternate). Residue lysine 121 forms a Glycyl lysine isopeptide (Lys-Gly) (interchain with G-Cter in ubiquitin); alternate linkage. Lysine 122 participates in a covalent cross-link: Glycyl lysine isopeptide (Lys-Gly) (interchain with G-Cter in ubiquitin). Beta stranded transmembrane passes span 122-131 (KSGKIKSAYK), 135-144 (INLGCDVDFD), 148-157 (PAIHGSAVFG), and 161-170 (WLAGYQMTFD). Residue lysine 173 forms a Glycyl lysine isopeptide (Lys-Gly) (interchain with G-Cter in ubiquitin) linkage. The next 6 membrane-spanning stretches (beta stranded) occupy residues 177-187 (TRSNFAVGYRT), 190-197 (FQLHTNVN), 201-210 (EFGGSIYQKV), 214-222 (FDTSVNLAW), 229-238 (TRFGIAAKYQ), and 243-250 (ASISAKVN). Phosphoserine is present on serine 252. Residues 254 to 256 (LIG) and 272 to 276 (SALVD) each bind NAD(+). 2 beta stranded membrane-spanning segments follow: residues 254–263 (LIGVGYTQTL) and 267–275 (VKLTLSALV). Lysine 278 is modified (N6-acetyllysine; alternate). A Glycyl lysine isopeptide (Lys-Gly) (interchain with G-Cter in ubiquitin); alternate cross-link involves residue lysine 278. The beta stranded transmembrane segment at 285-295 (HKLGLALELEA) threads the bilayer.

This sequence belongs to the eukaryotic mitochondrial porin family. Monomer, homodimer and higher order oligomers; formation of higher order structures is necessary for scramblase activity. Interacts with ARMC12 in a TBC1D21-dependent manner. Interacts with KLC3. Interacts with SPATA33. Interacts with PPP3CC in a SPATA33-dependent manner. Ubiquitinated by PRKN during mitophagy, leading to its degradation and enhancement of mitophagy. Deubiquitinated by USP30. In terms of tissue distribution, highest levels of expression detected in testis, less but still abundant expression in heart, kidney, brain, and skeletal muscle. Expressed in the sperm midpiece (at protein level).

It is found in the mitochondrion outer membrane. The protein resides in the membrane. It catalyses the reaction chloride(in) = chloride(out). The enzyme catalyses K(+)(in) = K(+)(out). The catalysed reaction is a 1,2-diacyl-sn-glycero-3-phospho-L-serine(in) = a 1,2-diacyl-sn-glycero-3-phospho-L-serine(out). It carries out the reaction a 1,2-diacyl-sn-glycero-3-phosphocholine(in) = a 1,2-diacyl-sn-glycero-3-phosphocholine(out). It catalyses the reaction a 1,2-diacyl-sn-glycero-3-phospho-(1D-myo-inositol)(in) = a 1,2-diacyl-sn-glycero-3-phospho-(1D-myo-inositol)(out). Functionally, non-selective voltage-gated ion channel that mediates the transport of anions and cations through the mitochondrion outer membrane and plasma membrane. The channel adopts an open conformation at zero mV and a closed conformation at both positive and negative potentials. There are two populations of channels; the main that functions in a lower open-state conductance with lower ion selectivity, that switch, in a voltage-dependent manner, from the open to a low-conducting 'closed' state and the other that has a normal ion selectivity in the typical high conductance, 'open' state. Binds various lipids, including the sphingolipid ceramide, the phospholipid phosphatidylcholine, and the sterols cholesterol and oxysterol. Binding of ceramide promotes the mitochondrial outer membrane permeabilization (MOMP) apoptotic pathway. In terms of biological role, catalyzes the scrambling of phospholipids across the outer mitochondrial membrane; the mechanism is unrelated to channel activity and is capable of translocating both anionic and zwitterionic phospholipids. The protein is Non-selective voltage-gated ion channel VDAC2 of Mus musculus (Mouse).